The sequence spans 409 residues: Argininosuccinate synthase (409 aa).

ATP contacts are provided by residues 13–21 (AYSGGLDTS) and alanine 40. Tyrosine 91 and serine 96 together coordinate L-citrulline. Glycine 121 serves as a coordination point for ATP. L-aspartate is bound by residues threonine 123, asparagine 127, and aspartate 128. L-citrulline is bound at residue asparagine 127. 5 residues coordinate L-citrulline: arginine 131, serine 183, serine 192, glutamate 268, and tyrosine 280.

The protein belongs to the argininosuccinate synthase family. Type 1 subfamily. In terms of assembly, homotetramer.

It localises to the cytoplasm. The catalysed reaction is L-citrulline + L-aspartate + ATP = 2-(N(omega)-L-arginino)succinate + AMP + diphosphate + H(+). The protein operates within amino-acid biosynthesis; L-arginine biosynthesis; L-arginine from L-ornithine and carbamoyl phosphate: step 2/3. This chain is Argininosuccinate synthase, found in Saccharophagus degradans (strain 2-40 / ATCC 43961 / DSM 17024).